A 750-amino-acid polypeptide reads, in one-letter code: Phosphoribosylformylglycinamidine synthase subunit PurL (750 aa).

Residue H54 is part of the active site. ATP is bound by residues Y57 and K101. Mg(2+) is bound at residue E103. Residues 104 to 107 and R126 contribute to the substrate site; that span reads SHNH. The active-site Proton acceptor is H105. Residue D127 coordinates Mg(2+). Q251 provides a ligand contact to substrate. D279 contributes to the Mg(2+) binding site. A substrate-binding site is contributed by 323-325; the sequence is ESQ. 2 residues coordinate ATP: D509 and G546. Residue N547 participates in Mg(2+) binding. S549 contacts substrate.

Belongs to the FGAMS family. In terms of assembly, monomer. Part of the FGAM synthase complex composed of 1 PurL, 1 PurQ and 2 PurS subunits.

It is found in the cytoplasm. The catalysed reaction is N(2)-formyl-N(1)-(5-phospho-beta-D-ribosyl)glycinamide + L-glutamine + ATP + H2O = 2-formamido-N(1)-(5-O-phospho-beta-D-ribosyl)acetamidine + L-glutamate + ADP + phosphate + H(+). The protein operates within purine metabolism; IMP biosynthesis via de novo pathway; 5-amino-1-(5-phospho-D-ribosyl)imidazole from N(2)-formyl-N(1)-(5-phospho-D-ribosyl)glycinamide: step 1/2. Its function is as follows. Part of the phosphoribosylformylglycinamidine synthase complex involved in the purines biosynthetic pathway. Catalyzes the ATP-dependent conversion of formylglycinamide ribonucleotide (FGAR) and glutamine to yield formylglycinamidine ribonucleotide (FGAM) and glutamate. The FGAM synthase complex is composed of three subunits. PurQ produces an ammonia molecule by converting glutamine to glutamate. PurL transfers the ammonia molecule to FGAR to form FGAM in an ATP-dependent manner. PurS interacts with PurQ and PurL and is thought to assist in the transfer of the ammonia molecule from PurQ to PurL. This is Phosphoribosylformylglycinamidine synthase subunit PurL from Cutibacterium acnes (strain DSM 16379 / KPA171202) (Propionibacterium acnes).